We begin with the raw amino-acid sequence, 84 residues long: MDIRKTYVIIFFVGILTISFSSYNIGQTRLVVIQEQEPHCIGPCEIAFGNRPCNEECTSQQYAYGFCDYQTKGEDNPQCCCYTS.

An N-terminal signal peptide occupies residues 1–21 (MDIRKTYVIIFFVGILTISFS). Intrachain disulfides connect C40–C81, C44–C67, C53–C79, and C57–C80.

This sequence belongs to the DEFL family.

Its subcellular location is the secreted. The sequence is that of Putative defensin-like protein 63 from Arabidopsis thaliana (Mouse-ear cress).